We begin with the raw amino-acid sequence, 1016 residues long: MDMIDEAITEVVRKIERERSVIHGALSMKRLTQNQTVHQQLHSNIEESKKSIIYLEERLEKLKLRKNGVRKSNSEKPSVGIEKNPSFSTTKSAKSFSSTSSNIDSNLDLLNYDTPLTISKISFLLQQLEFKLSVEEQYRKGIEKMAKLYEREHDRRSIAEAEKKYVESAQKITLLKQALKRYHDLHIEIDEEDVPSTESRGNLNARRPQSGLLKITVGSLRNVTHSAGISKQTEMIVAIRAEDLERARTRPSRTDRFNETFEIDLEKTNEVEIVVYEKKNEKLLLPVGLLWIRLSDLVEKQRRKKVEQEVSDKGWVSADKMINQRLSIFLPSALNNISKPESTDRPNTASGNQSVSAWFSLEPMGQINLTMNFTKHNTRKRPMDAGLGRQGAIRQRKESVHEVYGHKFLQHQFYQIMRCALCGEFLKNAAGMQCIDCHYTCHKKCYPKVVTKCISKSSDSASSEYEKINHRIPHHFESHTNIGANWCCHCGYILPLGRKTARKCTECGITAHAQCVHLVPDFCGMSMEMANRVISEIRTTKIYKAQQHKQKSSHHKHHHHKKSKSSSSKHKENDKASVSITTTTTPSITPADPVPTSPKPLAIEPVKRKPVHAGNLEVTSVSDNKLGATVQVVEQKVDDKADALTKPPSLDAVKEPIPVPSVETSVVAQDLTHKAKRIGLEDFTFLSVLGKGNFGKVMLAELKSEKQLYAIKVLKKEFILENDEVESTKSEKRVFLVANRERHPFLVNLHSCFQTETRIYFVMDFVSGGDLMLHIQQEQFSRRRAQFYAAEVCLALKYFHDNGIIYRDLKLDNILLSPDGHVKVADYGLCKEDMWHDNTTATFCGTPEFMAPEILLEQQYTRSVDWWAFGVLIYQMLLGQSPFRGEDEEEIFDAILSDEPLYPIHMPRDSVSILQQLLTRDPKKRLGSGPNDAEDVMTHPFFSNINWDDIYHKRTQPPYIPSLNSPTDTKYFDEEFTRELPVLTPVNSILTKEMQQHFEGFSYSCEDDKPSTTDNA.

In terms of domain architecture, REM-1 1 spans 1–68; sequence MDMIDEAITE…LEKLKLRKNG (68 aa). Residues 68-101 form a disordered region; it reads GVRKSNSEKPSVGIEKNPSFSTTKSAKSFSSTSS. Low complexity predominate over residues 86–101; the sequence is SFSTTKSAKSFSSTSS. The REM-1 2 domain maps to 111–188; that stretch reads NYDTPLTISK…LKRYHDLHIE (78 aa). One can recognise a C2 domain in the interval 195–307; it reads PSTESRGNLN…VEKQRRKKVE (113 aa). 2 Phorbol-ester/DAG-type zinc fingers span residues 405-453 and 473-523; these read GHKF…VTKC and PHHF…PDFC. A disordered region spans residues 543–602; it reads YKAQQHKQKSSHHKHHHHKKSKSSSSKHKENDKASVSITTTTTPSITPADPVPTSPKPLA. Over residues 546–568 the composition is skewed to basic residues; it reads QQHKQKSSHHKHHHHKKSKSSSS. Residues 579-590 are compositionally biased toward low complexity; it reads SITTTTTPSITP. Residues 683 to 942 form the Protein kinase domain; that stretch reads FTFLSVLGKG…AEDVMTHPFF (260 aa). ATP contacts are provided by residues 689 to 697 and K712; that span reads LGKGNFGKV. D808 serves as the catalytic Proton acceptor. Positions 943–1013 constitute an AGC-kinase C-terminal domain; the sequence is SNINWDDIYH…SCEDDKPSTT (71 aa). At T984 the chain carries Phosphothreonine.

This sequence belongs to the protein kinase superfamily. AGC Ser/Thr protein kinase family. PKC subfamily. In terms of assembly, interacts with rho2.

The catalysed reaction is L-seryl-[protein] + ATP = O-phospho-L-seryl-[protein] + ADP + H(+). The enzyme catalyses L-threonyl-[protein] + ATP = O-phospho-L-threonyl-[protein] + ADP + H(+). Functionally, involved in the control of the cell shape. Target of the inhibitor staurosporine. This Schizosaccharomyces pombe (strain 972 / ATCC 24843) (Fission yeast) protein is Protein kinase C-like 2 (pck2).